A 148-amino-acid polypeptide reads, in one-letter code: Lysozyme C (148 aa).

Residues 1–18 (MKAVIILGLVLLSVTVQG) form the signal peptide. The C-type lysozyme domain occupies 19-148 (KIFERCELAR…VSQYVQGCGV (130 aa)). Cystine bridges form between C24-C146, C48-C134, C83-C99, and C95-C113. Residues E53 and D71 contribute to the active site.

It belongs to the glycosyl hydrolase 22 family. As to quaternary structure, monomer.

It carries out the reaction Hydrolysis of (1-&gt;4)-beta-linkages between N-acetylmuramic acid and N-acetyl-D-glucosamine residues in a peptidoglycan and between N-acetyl-D-glucosamine residues in chitodextrins.. Its function is as follows. Lysozymes have primarily a bacteriolytic function; those in tissues and body fluids are associated with the monocyte-macrophage system and enhance the activity of immunoagents. The sequence is that of Lysozyme C (LYZ) from Allenopithecus nigroviridis (Allen's swamp monkey).